Consider the following 186-residue polypeptide: Probable chorismate pyruvate-lyase (186 aa).

Substrate is bound by residues arginine 80, leucine 118, and glutamate 170.

This sequence belongs to the UbiC family.

Its subcellular location is the cytoplasm. The catalysed reaction is chorismate = 4-hydroxybenzoate + pyruvate. The protein operates within cofactor biosynthesis; ubiquinone biosynthesis. Removes the pyruvyl group from chorismate, with concomitant aromatization of the ring, to provide 4-hydroxybenzoate (4HB) for the ubiquinone pathway. The sequence is that of Probable chorismate pyruvate-lyase from Pseudomonas savastanoi pv. phaseolicola (strain 1448A / Race 6) (Pseudomonas syringae pv. phaseolicola (strain 1448A / Race 6)).